A 503-amino-acid chain; its full sequence is Protein phosphatase eya-1 (503 aa).

D237 serves as the catalytic Nucleophile. Residues D237 and D239 each coordinate Mg(2+). D239 (proton donor) is an active-site residue.

It belongs to the HAD-like hydrolase superfamily. EYA family. Interacts (via C-terminus) with ceh-34 (via N-terminus). The cofactor is Mg(2+). In terms of tissue distribution, expressed in body wall muscles. Expressed in BAG sensory neurons and in other head neurons.

The protein localises to the nucleus. It carries out the reaction O-phospho-L-tyrosyl-[protein] + H2O = L-tyrosyl-[protein] + phosphate. Functionally, tyrosine protein phosphatase. Acts probably as a transcription regulator in the embryonic and postembryonic development of several tissues including pharynx, vulva and gonads. Required for the development of anterior tissues during late embryogenesis. Together with ceh-34, required to specify the coelomocyte fate in embryonic and postembryonic precursors. In the anterior part of the embryo, prevents apoptosis in cells that are not fated to die. Together with ceh-34 activates proapoptotic factor egl-1 expression to promote motor neuron M4 sister cell apoptosis. Also promotes apoptosis of I1 pharyngeal neuron sister cell. Plays a role in locomotion and fertility. May play a role in resistance to heat and oxidative stresses. May cooperate with the transcription factors vab-3 and ceh-32 to repress transcription factor ets-5 expression in non BAG neuronal cells. The chain is Protein phosphatase eya-1 from Caenorhabditis elegans.